The primary structure comprises 122 residues: UPF0382 membrane protein SAB0533 (122 aa).

4 helical membrane-spanning segments follow: residues 3-23 (LFII…AFGA), 46-66 (MYHG…SINV), 69-89 (AGWL…ILVL), and 98-118 (ITPI…IATF).

Belongs to the UPF0382 family.

The protein localises to the cell membrane. The protein is UPF0382 membrane protein SAB0533 of Staphylococcus aureus (strain bovine RF122 / ET3-1).